The sequence spans 271 residues: Phosphate import ATP-binding protein PstB 3 (271 aa).

An ABC transporter domain is found at 20-266 (LRVEGLGFYY…PQETQTRDYV (247 aa)). 52–59 (GPSGCGKS) serves as a coordination point for ATP.

This sequence belongs to the ABC transporter superfamily. Phosphate importer (TC 3.A.1.7) family. In terms of assembly, the complex is composed of two ATP-binding proteins (PstB), two transmembrane proteins (PstC and PstA) and a solute-binding protein (PstS).

The protein resides in the cell inner membrane. The catalysed reaction is phosphate(out) + ATP + H2O = ADP + 2 phosphate(in) + H(+). Functionally, part of the ABC transporter complex PstSACB involved in phosphate import. Responsible for energy coupling to the transport system. The polypeptide is Phosphate import ATP-binding protein PstB 3 (Synechocystis sp. (strain ATCC 27184 / PCC 6803 / Kazusa)).